The primary structure comprises 30 residues: L-amino-acid oxidase (30 aa).

The protein belongs to the flavin monoamine oxidase family. FIG1 subfamily. In terms of assembly, monomer. This is in contrast with most of its orthologs, that are non-covalently linked homodimers. The cofactor is FAD. N-glycosylated. Expressed by the venom gland.

It is found in the secreted. It catalyses the reaction an L-alpha-amino acid + O2 + H2O = a 2-oxocarboxylate + H2O2 + NH4(+). The catalysed reaction is L-leucine + O2 + H2O = 4-methyl-2-oxopentanoate + H2O2 + NH4(+). It carries out the reaction L-phenylalanine + O2 + H2O = 3-phenylpyruvate + H2O2 + NH4(+). The enzyme catalyses L-tryptophan + O2 + H2O = indole-3-pyruvate + H2O2 + NH4(+). It catalyses the reaction L-methionine + O2 + H2O = 4-methylsulfanyl-2-oxobutanoate + H2O2 + NH4(+). The catalysed reaction is L-2-aminohexanoate + O2 + H2O = 2-oxohexanoate + H2O2 + NH4(+). It carries out the reaction L-tyrosine + O2 + H2O = 3-(4-hydroxyphenyl)pyruvate + H2O2 + NH4(+). Functionally, catalyzes an oxidative deamination of predominantly hydrophobic and aromatic L-amino acids, thus producing hydrogen peroxide that may contribute to the diverse toxic effects of this enzyme. Is highly active against L-Met, L-Leu, L-norleucine (L-2-aminohexanoate), L-Trp, L-Phe, moderately active against L-Tyr, and no active on L-Gly, L-Ala, L-Val, L-Pro, L-His, L-Lys, L-Arg, L-Asp, L-Asn, L-Gln, L-Glu, L-Ser, and L-Thr. Exhibits diverse biological activities, such as hemorrhage, hemolysis, edema, antibacterial and antiparasitic activities. In addition, this protein induces apoptosis. It also interacts with endothelial cells, and inhibits collagen- and ADP-induced platelet aggregation. L-LAAO family effects on platelets are controversial, since it either induces aggregation or inhibits agonist-induced aggregation. These different effects are probably due to different experimental conditions. This chain is L-amino-acid oxidase, found in Bothrops leucurus (Whitetail lancehead).